A 474-amino-acid polypeptide reads, in one-letter code: Glutathione synthetase (474 aa).

A2 is subject to N-acetylalanine. Residue R125 participates in substrate binding. Residue E144 participates in ATP binding. Residues E144 and N146 each coordinate Mg(2+). Residues 148–151 (ISAS), 214–216 (ERN), Q220, and 267–270 (RDGY) each bind substrate. Residues K305, 364-373 (KPQREGGGNN), Y375, and 398-401 (MEKI) each bind ATP. Position 368 (E368) interacts with Mg(2+). Residue S415 is modified to Phosphoserine. Residue E425 coordinates ATP. R450 contributes to the substrate binding site. 2 residues coordinate ATP: K452 and D458. 461-462 (VA) serves as a coordination point for substrate.

This sequence belongs to the eukaryotic GSH synthase family. Homodimer. It depends on Mg(2+) as a cofactor.

It carries out the reaction gamma-L-glutamyl-L-cysteine + glycine + ATP = glutathione + ADP + phosphate + H(+). The enzyme catalyses gamma-L-glutamyl-(2S)-2-aminobutanoate + glycine + ATP = ophthalmate + ADP + phosphate + H(+). It participates in sulfur metabolism; glutathione biosynthesis; glutathione from L-cysteine and L-glutamate: step 2/2. Catalyzes the production of glutathione from gamma-glutamylcysteine and glycine in an ATP-dependent manner. Glutathione (gamma-glutamylcysteinylglycine, GSH) is the most abundant intracellular thiol in living aerobic cells and is required for numerous processes including the protection of cells against oxidative damage, amino acid transport, the detoxification of foreign compounds, the maintenance of protein sulfhydryl groups in a reduced state and acts as a cofactor for a number of enzymes. Participates in ophthalmate biosynthesis in hepatocytes. This is Glutathione synthetase from Mus musculus (Mouse).